The following is a 266-amino-acid chain: Undecaprenyl-diphosphatase (266 aa).

Transmembrane regions (helical) follow at residues 1–21 (MDTF…FLPI), 39–59 (QGLS…VIYF), 87–107 (WWII…KDFI), 111–131 (LRSA…LWWA), 149–169 (ALLI…RSGA), 183–203 (AAAR…AILV), 218–238 (ALTL…HYFL), and 246–266 (MTPF…FIFL).

This sequence belongs to the UppP family.

The protein localises to the cell inner membrane. It catalyses the reaction di-trans,octa-cis-undecaprenyl diphosphate + H2O = di-trans,octa-cis-undecaprenyl phosphate + phosphate + H(+). In terms of biological role, catalyzes the dephosphorylation of undecaprenyl diphosphate (UPP). Confers resistance to bacitracin. In Shewanella sp. (strain MR-4), this protein is Undecaprenyl-diphosphatase.